The chain runs to 331 residues: Coiled-coil domain-containing protein 92 (331 aa).

2 coiled-coil regions span residues 18–44 (MAAT…HAST) and 76–152 (DGTS…EQRA). Residues 171 to 184 (SSSGTSDASPSGSP) show a composition bias toward low complexity. The segment at 171-212 (SSSGTSDASPSGSPVLASYKPAPPKDKLPETPRRRMKKSLSA) is disordered. The span at 193-203 (PPKDKLPETPR) shows a compositional bias: basic and acidic residues. Ser209 carries the phosphoserine modification.

Interacts with CEP164. As to quaternary structure, (Microbial infection) Interacts with ebolavirus protein NP; this interaction sequesters NP in the cytoplasm. Phosphorylated at Ser-209 by TTBK2.

It is found in the cytoplasm. It localises to the cytoskeleton. The protein resides in the microtubule organizing center. Its subcellular location is the centrosome. The protein localises to the centriole. Interferon-stimulated protein that plays a role in innate immunity. Strongly inhibits ebolavirus transcription and replication. Forms a complex with viral RNA-bound nucleocapsid NP and thereby prevents the transport of NP to the cell surface. This is Coiled-coil domain-containing protein 92 (CCDC92) from Homo sapiens (Human).